We begin with the raw amino-acid sequence, 199 residues long: Recombination protein RecR (199 aa).

The C4-type zinc finger occupies 56 to 71; it reads CSICFNWSAEDPCEIC. The Toprim domain maps to 79-174; it reads SLWCVVADVK…TLRMTRLAFG (96 aa).

Belongs to the RecR family.

May play a role in DNA repair. It seems to be involved in an RecBC-independent recombinational process of DNA repair. It may act with RecF and RecO. The sequence is that of Recombination protein RecR from Synechococcus sp. (strain JA-2-3B'a(2-13)) (Cyanobacteria bacterium Yellowstone B-Prime).